We begin with the raw amino-acid sequence, 665 residues long: LisH domain-containing protein ARMC9 (665 aa).

The LisH domain occupies 7-39 (HESELLGLVKEYLDFAEFEDTLKTFSKECKIKG). Residues 201 to 235 (ENGQSNKEMLQQLHQQLVEAERRSMTYLKRYNKIQ) are a coiled coil. A Phosphoserine modification is found at S582. The tract at residues 642-665 (VQWSGDEPLQRPVTPGGHRNGYPV) is disordered.

In terms of assembly, interacts with TOGARAM1, CCDC66, CEP104, CSPP1 and CEP290. Interacts with NDUFAF2.

It localises to the cytoplasm. The protein localises to the cytoskeleton. It is found in the cilium basal body. The protein resides in the cell projection. Its subcellular location is the cilium. It localises to the microtubule organizing center. The protein localises to the centrosome. It is found in the centriole. Functionally, involved in ciliogenesis. It is required for appropriate acetylation and polyglutamylation of ciliary microtubules, and regulation of cilium length. Acts as a positive regulator of hedgehog (Hh)signaling. May participate in the trafficking and/or retention of GLI2 and GLI3 proteins at the ciliary tip. This is LisH domain-containing protein ARMC9 (ARMC9) from Pongo abelii (Sumatran orangutan).